Here is a 61-residue protein sequence, read N- to C-terminus: Large ribosomal subunit protein bL32 (61 aa).

This sequence belongs to the bacterial ribosomal protein bL32 family.

This is Large ribosomal subunit protein bL32 from Acidithiobacillus ferrooxidans (strain ATCC 23270 / DSM 14882 / CIP 104768 / NCIMB 8455) (Ferrobacillus ferrooxidans (strain ATCC 23270)).